The chain runs to 297 residues: 32 kDa beta-galactoside-binding lectin lec-3 (297 aa).

2 consecutive Galectin domains span residues 11–142 (YRSK…VQWG) and 151–290 (ESGI…IQVV). Residue 224-230 (WGNEERE) coordinates a beta-D-galactoside.

Binds galactose. This Caenorhabditis elegans protein is 32 kDa beta-galactoside-binding lectin lec-3 (lec-3).